The chain runs to 292 residues: Ribosomal protein L11 methyltransferase (292 aa).

Residues T145, G166, D188, and N229 each contribute to the S-adenosyl-L-methionine site.

It belongs to the methyltransferase superfamily. PrmA family.

The protein localises to the cytoplasm. It catalyses the reaction L-lysyl-[protein] + 3 S-adenosyl-L-methionine = N(6),N(6),N(6)-trimethyl-L-lysyl-[protein] + 3 S-adenosyl-L-homocysteine + 3 H(+). Methylates ribosomal protein L11. The protein is Ribosomal protein L11 methyltransferase of Alteromonas mediterranea (strain DSM 17117 / CIP 110805 / LMG 28347 / Deep ecotype).